We begin with the raw amino-acid sequence, 547 residues long: CTP synthase (547 aa).

Residues 1 to 267 (MKTKFIFITG…DQKIAIMLRL (267 aa)) form an amidoligase domain region. Ser14 serves as a coordination point for CTP. A UTP-binding site is contributed by Ser14. ATP is bound by residues 15 to 20 (SLGKGL) and Asp72. The Mg(2+) site is built by Asp72 and Glu141. CTP is bound by residues 148 to 150 (DIE), 188 to 193 (KTKPTQ), and Lys224. UTP-binding positions include 188-193 (KTKPTQ) and Lys224. Residues 292 to 545 (TIGIVGKYVD…IRAAKTHPAG (254 aa)) form the Glutamine amidotransferase type-1 domain. L-glutamine is bound at residue Gly354. The Nucleophile; for glutamine hydrolysis role is filled by Cys381. L-glutamine contacts are provided by residues 382-385 (LGMQ), Glu405, and Arg473. Residues His518 and Glu520 contribute to the active site.

This sequence belongs to the CTP synthase family. In terms of assembly, homotetramer.

It catalyses the reaction UTP + L-glutamine + ATP + H2O = CTP + L-glutamate + ADP + phosphate + 2 H(+). The catalysed reaction is L-glutamine + H2O = L-glutamate + NH4(+). The enzyme catalyses UTP + NH4(+) + ATP = CTP + ADP + phosphate + 2 H(+). Its pathway is pyrimidine metabolism; CTP biosynthesis via de novo pathway; CTP from UDP: step 2/2. With respect to regulation, allosterically activated by GTP, when glutamine is the substrate; GTP has no effect on the reaction when ammonia is the substrate. The allosteric effector GTP functions by stabilizing the protein conformation that binds the tetrahedral intermediate(s) formed during glutamine hydrolysis. Inhibited by the product CTP, via allosteric rather than competitive inhibition. Its function is as follows. Catalyzes the ATP-dependent amination of UTP to CTP with either L-glutamine or ammonia as the source of nitrogen. Regulates intracellular CTP levels through interactions with the four ribonucleotide triphosphates. This chain is CTP synthase, found in Nitratidesulfovibrio vulgaris (strain DP4) (Desulfovibrio vulgaris).